Reading from the N-terminus, the 181-residue chain is Shikimate kinase 2 (181 aa).

12–17 (GCGKTT) contributes to the ATP binding site. 2 residues coordinate Mg(2+): Thr-16 and Asp-32. Substrate-binding residues include Asp-34, Arg-58, and Gly-79. Residues 112 to 126 (EAEPEADLRPTLTGK) form an LID domain region. Arg-120 lines the ATP pocket. Arg-139 is a substrate binding site.

Belongs to the shikimate kinase family. AroL subfamily. As to quaternary structure, monomer. Mg(2+) serves as cofactor.

It is found in the cytoplasm. The catalysed reaction is shikimate + ATP = 3-phosphoshikimate + ADP + H(+). Its pathway is metabolic intermediate biosynthesis; chorismate biosynthesis; chorismate from D-erythrose 4-phosphate and phosphoenolpyruvate: step 5/7. Functionally, catalyzes the specific phosphorylation of the 3-hydroxyl group of shikimic acid using ATP as a cosubstrate. This Salmonella dublin (strain CT_02021853) protein is Shikimate kinase 2.